Consider the following 626-residue polypeptide: Chaperone protein HtpG (626 aa).

The tract at residues 1–341 is a; substrate-binding; sequence MAKREFKAES…SEDLSLNISR (341 aa). Positions 342-552 are b; sequence EMLQHDRQLK…DGEVTIEMEK (211 aa). The tract at residues 553 to 626 is c; the sequence is ILNAMPDNQH…FTNDICKVMA (74 aa).

The protein belongs to the heat shock protein 90 family. Homodimer.

Its subcellular location is the cytoplasm. Molecular chaperone. Has ATPase activity. The polypeptide is Chaperone protein HtpG (Bacillus licheniformis (strain ATCC 14580 / DSM 13 / JCM 2505 / CCUG 7422 / NBRC 12200 / NCIMB 9375 / NCTC 10341 / NRRL NRS-1264 / Gibson 46)).